The sequence spans 135 residues: Gene 52 protein (135 aa).

2 disordered regions span residues 1 to 20 (MASG…PTPE) and 110 to 135 (LGGR…AEKQ). The span at 122–135 (SKPRGRSKHRAEKQ) shows a compositional bias: basic residues.

This sequence belongs to the herpesviridae BLRF2 family.

This Equine herpesvirus 2 (strain 86/87) (EHV-2) protein is Gene 52 protein (52).